Consider the following 708-residue polypeptide: Glutamate--tRNA ligase, cytoplasmic (708 aa).

2 interaction with ARC1 regions span residues 106-115 (NLRTFILGGL) and 141-157 (KVDV…EMDP). 205-207 (RFP) serves as a coordination point for L-glutamate. Positions 210 to 219 (PSGYLHIGHA) match the 'HIGH' region motif. ATP is bound at residue H215. D241 is an L-glutamate binding site. At T300 the chain carries Phosphothreonine. Residues 382 to 386 (YDFCV) and R400 contribute to the L-glutamate site. ATP-binding positions include E403 and 437–441 (LLSKR). A 'KMSKS' region motif is present at residues 437–441 (LLSKR).

The protein belongs to the class-I aminoacyl-tRNA synthetase family. Glutamate--tRNA ligase type 2 subfamily. As to quaternary structure, component of a yeast aminoacyl-tRNA synthase (aaRS) complex formed by methionyl-tRNA synthase MES1, glutamyl-tRNA synthase GUS1 and the tRNA aminoacylation cofactor ARC1 in a stoichiometric complex. Interacts (via N-ter) with ARC1 (via N-ter). Can also form a stable binary complex with ARC1 that is functional in terms of aminoacylation. ARC1 increases the affinity for cognate tRNAs due to the presence of a tRNA binding domain in the middle and C-terminal part of ARC1.

The protein localises to the cytoplasm. The protein resides in the mitochondrion. The enzyme catalyses tRNA(Glu) + L-glutamate + ATP = L-glutamyl-tRNA(Glu) + AMP + diphosphate. Functionally, catalyzes the attachment of glutamate to tRNA(Glu) in a two-step reaction: glutamate is first activated by ATP to form Glu-AMP and then transferred to the acceptor end of tRNA(Glu). In mitochondria, constitutes the nondiscriminating glutamyl-tRNA synthase that generates the mitochondrial mischarged glutamyl-tRNA(Gln) substrate for the tRNA-dependent amidotransferase (AdT), which generates mitochondrial glutaminyl-tRNA(Gln) by transamidation of glutamyl-tRNA(Gln). In Saccharomyces cerevisiae (strain ATCC 204508 / S288c) (Baker's yeast), this protein is Glutamate--tRNA ligase, cytoplasmic (GUS1).